The chain runs to 148 residues: MEVLIIIFGIILDRITKLWALKELSSGHEIEIIKNFFSFNYLENRGAAFGIFQGKTVLLVLVTLLIMIGVIYYFIKYRPTSRFMRIGVSFIVSGALGNLYDRIFYKYVVDFILIHYKNVYYYPTFNIADILVVVGTIMLAIFLLREGK.

A run of 2 helical transmembrane segments spans residues 57–77 (VLLV…FIKY) and 88–105 (VSFI…RIFY). Catalysis depends on residues aspartate 110 and aspartate 129. The chain crosses the membrane as a helical span at residues 124–144 (TFNIADILVVVGTIMLAIFLL).

The protein belongs to the peptidase A8 family.

It localises to the cell membrane. The enzyme catalyses Release of signal peptides from bacterial membrane prolipoproteins. Hydrolyzes -Xaa-Yaa-Zaa-|-(S,diacylglyceryl)Cys-, in which Xaa is hydrophobic (preferably Leu), and Yaa (Ala or Ser) and Zaa (Gly or Ala) have small, neutral side chains.. The protein operates within protein modification; lipoprotein biosynthesis (signal peptide cleavage). Its function is as follows. This protein specifically catalyzes the removal of signal peptides from prolipoproteins. In Clostridium novyi (strain NT), this protein is Lipoprotein signal peptidase.